We begin with the raw amino-acid sequence, 93 residues long: Acylphosphatase (93 aa).

The Acylphosphatase-like domain occupies 6-93; that stretch reads RAHILVSGEV…GDLGPFSVRH (88 aa). Residues R21 and N39 contribute to the active site.

The protein belongs to the acylphosphatase family.

It catalyses the reaction an acyl phosphate + H2O = a carboxylate + phosphate + H(+). In Anaeromyxobacter sp. (strain Fw109-5), this protein is Acylphosphatase (acyP).